The primary structure comprises 295 residues: Glycine N-acyltransferase-like protein Keg1 (295 aa).

N6-acetyllysine; alternate is present on Lys41. Position 41 is an N6-succinyllysine; alternate (Lys41). The residue at position 43 (Lys43) is an N6-acetyllysine. An N6-acetyllysine; alternate modification is found at Lys48. Lys48 carries the N6-succinyllysine; alternate modification. N6-acetyllysine is present on residues Lys80 and Lys83. N6-acetyllysine; alternate is present on residues Lys124, Lys128, and Lys140. N6-succinyllysine; alternate is present on residues Lys124, Lys128, and Lys140. Residue Lys150 is modified to N6-acetyllysine. Lys255 is modified (N6-acetyllysine; alternate). N6-succinyllysine; alternate is present on Lys255.

This sequence belongs to the glycine N-acyltransferase family. In terms of assembly, binds to microtubules.

Its subcellular location is the cytoplasm. The protein localises to the cytoskeleton. It localises to the microtubule organizing center. The protein resides in the centrosome. The enzyme catalyses an acyl-CoA + glycine = an N-acylglycine + CoA + H(+). Functionally, acyltransferase which transfers the acyl group to the N-terminus of glycine. Can conjugate a multitude of substrates to form a variety of N-acylglycines. In Mus musculus (Mouse), this protein is Glycine N-acyltransferase-like protein Keg1 (Keg1).